Reading from the N-terminus, the 282-residue chain is Bifunctional protein FolD (282 aa).

NADP(+) is bound by residues 160–162, Ser-185, and Ile-228; that span reads NRS.

It belongs to the tetrahydrofolate dehydrogenase/cyclohydrolase family. Homodimer.

It carries out the reaction (6R)-5,10-methylene-5,6,7,8-tetrahydrofolate + NADP(+) = (6R)-5,10-methenyltetrahydrofolate + NADPH. It catalyses the reaction (6R)-5,10-methenyltetrahydrofolate + H2O = (6R)-10-formyltetrahydrofolate + H(+). It functions in the pathway one-carbon metabolism; tetrahydrofolate interconversion. Catalyzes the oxidation of 5,10-methylenetetrahydrofolate to 5,10-methenyltetrahydrofolate and then the hydrolysis of 5,10-methenyltetrahydrofolate to 10-formyltetrahydrofolate. The protein is Bifunctional protein FolD of Cenarchaeum symbiosum (strain A).